Here is a 749-residue protein sequence, read N- to C-terminus: Ribosomal RNA large subunit methyltransferase K/L (749 aa).

Residues 43-154 form the THUMP domain; the sequence is QGYKVCLWSR…KDKATIYLDL (112 aa). The interval 386-406 is disordered; it reads VEPVAPKKTNKETPEPINPWT.

The protein belongs to the methyltransferase superfamily. RlmKL family.

It localises to the cytoplasm. It catalyses the reaction guanosine(2445) in 23S rRNA + S-adenosyl-L-methionine = N(2)-methylguanosine(2445) in 23S rRNA + S-adenosyl-L-homocysteine + H(+). The enzyme catalyses guanosine(2069) in 23S rRNA + S-adenosyl-L-methionine = N(2)-methylguanosine(2069) in 23S rRNA + S-adenosyl-L-homocysteine + H(+). Its function is as follows. Specifically methylates the guanine in position 2445 (m2G2445) and the guanine in position 2069 (m7G2069) of 23S rRNA. The chain is Ribosomal RNA large subunit methyltransferase K/L from Psychromonas ingrahamii (strain DSM 17664 / CCUG 51855 / 37).